A 233-amino-acid chain; its full sequence is 2-C-methyl-D-erythritol 4-phosphate cytidylyltransferase (233 aa).

This sequence belongs to the IspD/TarI cytidylyltransferase family. IspD subfamily.

It catalyses the reaction 2-C-methyl-D-erythritol 4-phosphate + CTP + H(+) = 4-CDP-2-C-methyl-D-erythritol + diphosphate. Its pathway is isoprenoid biosynthesis; isopentenyl diphosphate biosynthesis via DXP pathway; isopentenyl diphosphate from 1-deoxy-D-xylulose 5-phosphate: step 2/6. Catalyzes the formation of 4-diphosphocytidyl-2-C-methyl-D-erythritol from CTP and 2-C-methyl-D-erythritol 4-phosphate (MEP). The sequence is that of 2-C-methyl-D-erythritol 4-phosphate cytidylyltransferase from Aromatoleum aromaticum (strain DSM 19018 / LMG 30748 / EbN1) (Azoarcus sp. (strain EbN1)).